We begin with the raw amino-acid sequence, 170 residues long: Peptide deformylase (170 aa).

Positions 93 and 135 each coordinate Fe cation. Glutamate 136 is an active-site residue. Histidine 139 is a Fe cation binding site.

The protein belongs to the polypeptide deformylase family. Requires Fe(2+) as cofactor.

It carries out the reaction N-terminal N-formyl-L-methionyl-[peptide] + H2O = N-terminal L-methionyl-[peptide] + formate. Its function is as follows. Removes the formyl group from the N-terminal Met of newly synthesized proteins. Requires at least a dipeptide for an efficient rate of reaction. N-terminal L-methionine is a prerequisite for activity but the enzyme has broad specificity at other positions. The protein is Peptide deformylase of Acidobacterium capsulatum (strain ATCC 51196 / DSM 11244 / BCRC 80197 / JCM 7670 / NBRC 15755 / NCIMB 13165 / 161).